Here is a 629-residue protein sequence, read N- to C-terminus: tRNA uridine 5-carboxymethylaminomethyl modification enzyme MnmG (629 aa).

11–16 (GGGHAG) provides a ligand contact to FAD. Position 273–287 (273–287 (GPRYCPSFEDKVVRF)) interacts with NAD(+).

The protein belongs to the MnmG family. As to quaternary structure, homodimer. Heterotetramer of two MnmE and two MnmG subunits. The cofactor is FAD.

It is found in the cytoplasm. In terms of biological role, NAD-binding protein involved in the addition of a carboxymethylaminomethyl (cmnm) group at the wobble position (U34) of certain tRNAs, forming tRNA-cmnm(5)s(2)U34. The polypeptide is tRNA uridine 5-carboxymethylaminomethyl modification enzyme MnmG (Mycoplasma capricolum subsp. capricolum (strain California kid / ATCC 27343 / NCTC 10154)).